Here is a 276-residue protein sequence, read N- to C-terminus: MDADSLLLSLELASGSGQGLSPDRRASLLTSLMLVKRDYRFARVLFWGRILGLVADYYIAQGLSEDQLAPRKTLYSLNCTEWSLLPPATEEMAMQISVVSGRFMGDPSHEYEHTELQKVNEGEKVFDEEVVVQIKEETRLVSIIDQIDKAVAIIPRGALFKTPFGVTHVNRTFEGLPLSEVRKLSSYFHFREAIDLKNKTLLEKSDLEPSLDFLDSLEYDIPRGSWSIQMERGNALVVLRSLLWPGLTFYHAPRTKNYGYIYVGTGEKNMDLPFML.

This sequence belongs to the flagellar radial spoke RSP9 family. In terms of assembly, component of the axonemal radial spoke 1 (RS1) and 2 (RS2) complexes, at least composed of spoke head proteins RSPH1, RSPH3, RSPH9 and the cilia-specific component RSPH4A or sperm-specific component RSPH6A, spoke stalk proteins RSPH14, DNAJB13, DYDC1, ROPN1L and NME5, and the RS1 complex-specific anchor protein IQUB. Interacts with IQUB. Interacts with RSPH3B. Interacts with RSPH4A. Interacts with RSPH6A. Interacts with CFAP61. Interacts with LRRC23. As to expression, expressed in the testis, trachea, lung, oviduct and ependymal cells (at protein level).

Its subcellular location is the cytoplasm. It localises to the cytoskeleton. The protein localises to the cilium axoneme. The protein resides in the flagellum axoneme. It is found in the cell projection. Its subcellular location is the kinocilium. Functions as part of axonemal radial spoke complexes that play an important part in the motility of sperm and cilia. Essential for both the radial spoke head assembly and the central pair microtubule stability in ependymal motile cilia. Required for motility of olfactory and neural cilia and for the structural integrity of ciliary axonemes in both 9+0 and 9+2 motile cilia. In Mus musculus (Mouse), this protein is Radial spoke head protein 9 homolog (Rsph9).